We begin with the raw amino-acid sequence, 640 residues long: ATP-dependent DNA helicase YoaA (640 aa).

The Helicase ATP-binding domain occupies Glu16–Ser278. Ala51–Thr58 is a binding site for ATP. Cys114 serves as a coordination point for [4Fe-4S] cluster. The DEAH box signature appears at Gly125–Gly128. [4Fe-4S] cluster is bound by residues Cys174, Cys179, and Cys185. The DEAH box signature appears at Asp231 to His234. The Helicase C-terminal domain occupies Ser458–Ile634.

This sequence belongs to the helicase family. DinG subfamily. Requires [4Fe-4S] cluster as cofactor.

The enzyme catalyses Couples ATP hydrolysis with the unwinding of duplex DNA at the replication fork by translocating in the 5'-3' direction. This creates two antiparallel DNA single strands (ssDNA). The leading ssDNA polymer is the template for DNA polymerase III holoenzyme which synthesizes a continuous strand.. The catalysed reaction is ATP + H2O = ADP + phosphate + H(+). Its function is as follows. Probably a 5'-3' DNA helicase. This Haemophilus influenzae (strain ATCC 51907 / DSM 11121 / KW20 / Rd) protein is ATP-dependent DNA helicase YoaA.